Reading from the N-terminus, the 244-residue chain is Transcriptional activator protein Anr (244 aa).

21-149 lines the a nucleoside 3',5'-cyclic phosphate pocket; sequence APLCLPLSLN…RVMSREIRDD (129 aa). Positions 159–232 constitute an HTH crp-type domain; sequence KTADERIATF…GKEVHILDPI (74 aa). Residues 192–211 constitute a DNA-binding region (H-T-H motif); the sequence is RNEIGNYLGLAVETVSRVFT.

Functionally, transcriptional activator of anaerobic gene expression. Regulates the expression of the components of the hydrogen cyanide synthase (HcnABC) in a positive manner. May also act as an iron sensor. This Pseudomonas protegens (strain DSM 19095 / LMG 27888 / CFBP 6595 / CHA0) protein is Transcriptional activator protein Anr.